The sequence spans 284 residues: MDAIKKKMVAMKMEKKNALDRAEQLEQKLRETEEAKAKIEDDYNSLVKKNIQTENDYDNCNTQLQDVQAKYERAEKQIQEHEQEIQSLTRKISLLEEGIMKAEERFTTASGKLEEASKAADESERNRKVLENLNSGNDERIDQLEKQLTEAKWIAEEADKKYEEAARKLAITEVDLERAEARLEAAEAKVIDLEEQLTVVGANIKTLQVQNDQASQREDSYEETIRDLTNRLKDAENRATEAERTVSKLQKEVDRLEDELLTEKEKYKAISDELDATFAELAGY.

Residues 1 to 273 (MDAIKKKMVA…KEKYKAISDE (273 aa)) are a coiled coil. The segment covering 110–130 (SGKLEEASKAADESERNRKVL) has biased composition (basic and acidic residues). The tract at residues 110-134 (SGKLEEASKAADESERNRKVLENLN) is disordered.

Belongs to the tropomyosin family. As to quaternary structure, homodimer.

Tropomyosin, in association with the troponin complex, plays a central role in the calcium dependent regulation of muscle contraction. The polypeptide is Tropomyosin (Perna viridis (Asian green mussel)).